The primary structure comprises 320 residues: HPr kinase/phosphorylase (320 aa).

Active-site residues include H141 and K162. Residue 156 to 163 coordinates ATP; the sequence is GHSGLGKS. S163 contacts Mg(2+). The Proton acceptor; for phosphorylation activity. Proton donor; for dephosphorylation activity role is filled by D180. Residues 204–213 form an important for the catalytic mechanism of both phosphorylation and dephosphorylation region; the sequence is LEVRGLGILN. E205 contributes to the Mg(2+) binding site. Residue R248 is part of the active site. An important for the catalytic mechanism of dephosphorylation region spans residues 269–274; it reads PVAVGR.

It belongs to the HPrK/P family. In terms of assembly, homohexamer. Mg(2+) serves as cofactor.

The enzyme catalyses [HPr protein]-L-serine + ATP = [HPr protein]-O-phospho-L-serine + ADP + H(+). It carries out the reaction [HPr protein]-O-phospho-L-serine + phosphate + H(+) = [HPr protein]-L-serine + diphosphate. Catalyzes the ATP- as well as the pyrophosphate-dependent phosphorylation of a specific serine residue in HPr, a phosphocarrier protein of the phosphoenolpyruvate-dependent sugar phosphotransferase system (PTS). HprK/P also catalyzes the pyrophosphate-producing, inorganic phosphate-dependent dephosphorylation (phosphorolysis) of seryl-phosphorylated HPr (P-Ser-HPr). The polypeptide is HPr kinase/phosphorylase (Neisseria meningitidis serogroup B (strain ATCC BAA-335 / MC58)).